The chain runs to 304 residues: Aspartate carbamoyltransferase catalytic subunit (304 aa).

Carbamoyl phosphate is bound by residues R54 and T55. K83 contacts L-aspartate. Positions 104, 132, and 135 each coordinate carbamoyl phosphate. L-aspartate contacts are provided by R165 and R226. Carbamoyl phosphate contacts are provided by L265 and P266.

This sequence belongs to the aspartate/ornithine carbamoyltransferase superfamily. ATCase family. As to quaternary structure, heterooligomer of catalytic and regulatory chains.

The catalysed reaction is carbamoyl phosphate + L-aspartate = N-carbamoyl-L-aspartate + phosphate + H(+). Its pathway is pyrimidine metabolism; UMP biosynthesis via de novo pathway; (S)-dihydroorotate from bicarbonate: step 2/3. Catalyzes the condensation of carbamoyl phosphate and aspartate to form carbamoyl aspartate and inorganic phosphate, the committed step in the de novo pyrimidine nucleotide biosynthesis pathway. The sequence is that of Aspartate carbamoyltransferase catalytic subunit from Pyrobaculum neutrophilum (strain DSM 2338 / JCM 9278 / NBRC 100436 / V24Sta) (Thermoproteus neutrophilus).